Here is a 315-residue protein sequence, read N- to C-terminus: Methionyl-tRNA formyltransferase (315 aa).

113 to 116 (SLLP) serves as a coordination point for (6S)-5,6,7,8-tetrahydrofolate.

The protein belongs to the Fmt family.

It catalyses the reaction L-methionyl-tRNA(fMet) + (6R)-10-formyltetrahydrofolate = N-formyl-L-methionyl-tRNA(fMet) + (6S)-5,6,7,8-tetrahydrofolate + H(+). Functionally, attaches a formyl group to the free amino group of methionyl-tRNA(fMet). The formyl group appears to play a dual role in the initiator identity of N-formylmethionyl-tRNA by promoting its recognition by IF2 and preventing the misappropriation of this tRNA by the elongation apparatus. This Escherichia coli (strain SMS-3-5 / SECEC) protein is Methionyl-tRNA formyltransferase.